Reading from the N-terminus, the 296-residue chain is 1,2-beta-oligomannan phosphorylase (296 aa).

Belongs to the glycosyl hydrolase 130 family. As to quaternary structure, homodimer.

The enzyme catalyses [(1-&gt;2)-beta-D-mannosyl](n) + phosphate = [(1-&gt;2)-beta-D-mannosyl](n-1) + alpha-D-mannose 1-phosphate. It participates in nucleotide-sugar biosynthesis; GDP-alpha-D-mannose biosynthesis. Its function is as follows. Probably involved in a salvage pathway for GDP-D-mannose biosynthesis. Catalyzes the reversible phosphorolysis of 1,2-beta-oligomannan. In phosphorolytic reactions, prefers 1,2-beta-oligomannan with a degree of polymerization (DP) of 3, 4 and 5. Produces alpha-D-mannose 1-phosphate, which is the precursor of GDP-D-mannose. This Thermoanaerobacter sp. (strain X514) protein is 1,2-beta-oligomannan phosphorylase.